The chain runs to 624 residues: MSAIPEEFLSTQAQVDEQAIQPFPNSRKIHVAGSRPDIRVPMREITLSDTHTSQGREKNPPLTVYDTSGPYTDPEAKIDIRQGLSELRRNWIEERADTEILSDLSSQYGRQRNADSKLDSLRFAHLRPPRRAKAGHNVSQMHYARQGIITPEMEFIAIRENQRLEQYREQLAQHHPGQSFGAHLPSRLTPEFVRSEVARGRAIIPANINHTELEPMIIGRNFLVKINANIGNSAVTSSIAEEVDKMTWAIRWGADTVMDLSTGKNIHETREWIVRNSPVPIGTVPIYQALEKVGGKAEELTWEIFRDTLIEQAEQGVDYFTIHAGVRLAYVPLTAKRLTGIVSRGGSIMAKWCLAHHTESFLYTHFEEICEIMKAYDVSFSLGDGLRPGSLADANDAAQFAELETLGELTEIAWKHDVQTMIEGPGHVPMHLIKENMDKQLACCGEAPFYTLGPLTTDIAPGYDHITSGIGAAMIGWYGTAMLCYVTPKEHLGLPNKNDVKEGIITYKIAAHAADLAKGHPSAQIRDNAMSKARFEFRWEDQFNIGLDPDQAREYHDETLPKDSAKVAHFCSMCGPQFCSMKISQDVREYAKQKGLKHHTALEQGMAEKAQEFREKGAEIYHET.

A disordered region spans residues 48–70; the sequence is SDTHTSQGREKNPPLTVYDTSGP. Substrate contacts are provided by residues N229, M258, Y287, H323, 343 to 345, 384 to 387, and E423; these read SRG and DGLR. H427 is a Zn(2+) binding site. Y450 serves as a coordination point for substrate. Zn(2+) is bound at residue H491. [4Fe-4S] cluster is bound by residues C571, C574, and C579.

The protein belongs to the ThiC family. As to quaternary structure, homodimer. The cofactor is [4Fe-4S] cluster.

It catalyses the reaction 5-amino-1-(5-phospho-beta-D-ribosyl)imidazole + S-adenosyl-L-methionine = 4-amino-2-methyl-5-(phosphooxymethyl)pyrimidine + CO + 5'-deoxyadenosine + formate + L-methionine + 3 H(+). It participates in cofactor biosynthesis; thiamine diphosphate biosynthesis. Catalyzes the synthesis of the hydroxymethylpyrimidine phosphate (HMP-P) moiety of thiamine from aminoimidazole ribotide (AIR) in a radical S-adenosyl-L-methionine (SAM)-dependent reaction. This Nitrosococcus oceani (strain ATCC 19707 / BCRC 17464 / JCM 30415 / NCIMB 11848 / C-107) protein is Phosphomethylpyrimidine synthase.